The chain runs to 371 residues: GDSL esterase/lipase At3g27950 (371 aa).

A signal peptide spans 1–23 (MAISKITLAIIVLLLGFTEKLSA). The active-site Nucleophile is the Ser39. Residues Asn82, Asn143, Asn178, Asn194, and Asn315 are each glycosylated (N-linked (GlcNAc...) asparagine). Active-site residues include Asp334 and His337.

Belongs to the 'GDSL' lipolytic enzyme family.

The protein resides in the secreted. The protein is GDSL esterase/lipase At3g27950 of Arabidopsis thaliana (Mouse-ear cress).